The sequence spans 562 residues: Probable E3 ubiquitin-protein ligase ARI7 (562 aa).

The segment at 1–39 (MDSEEDMLDAHDMESGEDDFYSGGTDDCNDSDDGEPDYG) is disordered. Over residues 27–39 (DCNDSDDGEPDYG) the composition is skewed to acidic residues. A TRIAD supradomain region spans residues 133–346 (SELTCGICFD…GGFYACNRYE (214 aa)). Cys-137, Cys-140, Cys-154, His-156, Cys-159, Cys-162, Cys-182, Cys-187, Cys-226, Cys-231, Cys-248, Cys-250, Cys-255, Cys-258, His-263, Cys-268, Cys-295, and Cys-298 together coordinate Zn(2+). The segment at 137 to 187 (CGICFDSYPPEKIASVSCGHPFCTTCWTGYISTTINDGPGCLMLRCPDPSC) adopts an RING-type 1 zinc-finger fold. The segment at 206–268 (EKYNRYFLRS…TEEAHRPVDC (63 aa)) adopts an IBR-type zinc-finger fold. Residues 295-325 (CPRCKRPIEKNQGCMHMTCTPPCKYEFCWLC) form an RING-type 2; atypical zinc finger. Cys-308 is a catalytic residue. Zn(2+) is bound by residues Cys-313, Cys-317, Cys-322, Cys-325, His-332, and Cys-342. The disordered stretch occupies residues 524–562 (ACSSKSTSSKSTGCSSKTRGKGKGSSRTGGSSRNPDDNL). Residues 525–540 (CSSKSTSSKSTGCSSK) show a composition bias toward low complexity.

The protein belongs to the RBR family. Ariadne subfamily. It depends on Zn(2+) as a cofactor. Ubiquitous.

It catalyses the reaction [E2 ubiquitin-conjugating enzyme]-S-ubiquitinyl-L-cysteine + [acceptor protein]-L-lysine = [E2 ubiquitin-conjugating enzyme]-L-cysteine + [acceptor protein]-N(6)-ubiquitinyl-L-lysine.. The protein operates within protein modification; protein ubiquitination. Its function is as follows. Might act as an E3 ubiquitin-protein ligase, or as part of E3 complex, which accepts ubiquitin from specific E2 ubiquitin-conjugating enzymes and then transfers it to substrates. This is Probable E3 ubiquitin-protein ligase ARI7 (ARI7) from Arabidopsis thaliana (Mouse-ear cress).